Here is a 72-residue protein sequence, read N- to C-terminus: uncharacterized protein (72 aa).

The segment at 1–53 is disordered; sequence MTNEPSTSTPTSTSTSTSTSTSTSTTTLTSTSSTPTSTSTSTSTSTSTSTSTS.

This is an uncharacterized protein from Dictyostelium discoideum (Social amoeba).